Here is a 563-residue protein sequence, read N- to C-terminus: Membrane protein insertase YidC (563 aa).

Residues 6–26 (TVLWMIFSFSLLLLWNNWQIH) traverse the membrane as a helical segment. Residues 36-70 (PAPEAAATQQPKADANGTAASSTASIPSSPAAAPA) are disordered. The segment covering 54–70 (AASSTASIPSSPAAAPA) has biased composition (low complexity). Transmembrane regions (helical) follow at residues 373–393 (WGWTIVALTVIIKAVFFPLAA), 443–463 (LPMVVQIPVFIALYWVLLASV), 482–502 (PFFILPAIMMATMFLQIKLNP), and 512–532 (VMMIMPLVFGGMMFFFPAGLV).

Belongs to the OXA1/ALB3/YidC family. Type 1 subfamily. Interacts with the Sec translocase complex via SecD. Specifically interacts with transmembrane segments of nascent integral membrane proteins during membrane integration.

Its subcellular location is the cell inner membrane. Functionally, required for the insertion and/or proper folding and/or complex formation of integral membrane proteins into the membrane. Involved in integration of membrane proteins that insert both dependently and independently of the Sec translocase complex, as well as at least some lipoproteins. Aids folding of multispanning membrane proteins. The sequence is that of Membrane protein insertase YidC from Bordetella parapertussis (strain 12822 / ATCC BAA-587 / NCTC 13253).